Reading from the N-terminus, the 245-residue chain is Tetrahydromethanopterin S-methyltransferase subunit A 1 (245 aa).

Residues 1–222 (MADKKPAADN…AGNYSGKVQG (222 aa)) are Cytoplasmic-facing. Histidine 84 serves as a coordination point for 5-hydroxybenzimidazolylcob(I)amide. Residues 223-243 (IMIGLIFTLVIGFLLLMAPLL) form a helical membrane-spanning segment. The Extracellular segment spans residues 244 to 245 (GA).

Belongs to the MtrA family. The complex is composed of 8 subunits; MtrA, MtrB, MtrC, MtrD, MtrE, MtrF, MtrG and MtrH. Requires 5-hydroxybenzimidazolylcob(I)amide as cofactor.

The protein resides in the cell membrane. The catalysed reaction is 5-methyl-5,6,7,8-tetrahydromethanopterin + coenzyme M + 2 Na(+)(in) = 5,6,7,8-tetrahydromethanopterin + methyl-coenzyme M + 2 Na(+)(out). It participates in one-carbon metabolism; methanogenesis from CO(2); methyl-coenzyme M from 5,10-methylene-5,6,7,8-tetrahydromethanopterin: step 2/2. Its function is as follows. Part of a complex that catalyzes the formation of methyl-coenzyme M and tetrahydromethanopterin from coenzyme M and methyl-tetrahydromethanopterin. This is an energy-conserving, sodium-ion translocating step. This chain is Tetrahydromethanopterin S-methyltransferase subunit A 1, found in Methanobrevibacter ruminantium (strain ATCC 35063 / DSM 1093 / JCM 13430 / OCM 146 / M1) (Methanobacterium ruminantium).